A 148-amino-acid chain; its full sequence is Cuticle protein CP1499 (148 aa).

In terms of tissue distribution, calcified shell.

The protein is Cuticle protein CP1499 of Cancer pagurus (Rock crab).